The following is a 1178-amino-acid chain: DNA-directed RNA polymerase subunit beta' (1178 aa).

Zn(2+)-binding residues include cysteine 60, cysteine 62, cysteine 75, and cysteine 78. Mg(2+) contacts are provided by aspartate 450, aspartate 452, and aspartate 454. Cysteine 795, cysteine 869, cysteine 876, and cysteine 879 together coordinate Zn(2+).

Belongs to the RNA polymerase beta' chain family. As to quaternary structure, the RNAP catalytic core consists of 2 alpha, 1 beta, 1 beta' and 1 omega subunit. When a sigma factor is associated with the core the holoenzyme is formed, which can initiate transcription. The cofactor is Mg(2+). Zn(2+) is required as a cofactor.

It carries out the reaction RNA(n) + a ribonucleoside 5'-triphosphate = RNA(n+1) + diphosphate. Functionally, DNA-dependent RNA polymerase catalyzes the transcription of DNA into RNA using the four ribonucleoside triphosphates as substrates. This Clostridium perfringens (strain ATCC 13124 / DSM 756 / JCM 1290 / NCIMB 6125 / NCTC 8237 / Type A) protein is DNA-directed RNA polymerase subunit beta'.